The following is a 309-amino-acid chain: Protein FdhE (309 aa).

Belongs to the FdhE family.

It localises to the cytoplasm. Its function is as follows. Necessary for formate dehydrogenase activity. The polypeptide is Protein FdhE (Salmonella choleraesuis (strain SC-B67)).